The primary structure comprises 315 residues: Lipoyl synthase (315 aa).

[4Fe-4S] cluster contacts are provided by Cys-62, Cys-67, Cys-73, Cys-88, Cys-92, Cys-95, and Ser-302. Residues 73–291 (CFGHGTATFM…GELAKKLGFS (219 aa)) form the Radical SAM core domain.

This sequence belongs to the radical SAM superfamily. Lipoyl synthase family. [4Fe-4S] cluster is required as a cofactor.

It localises to the cytoplasm. It catalyses the reaction [[Fe-S] cluster scaffold protein carrying a second [4Fe-4S](2+) cluster] + N(6)-octanoyl-L-lysyl-[protein] + 2 oxidized [2Fe-2S]-[ferredoxin] + 2 S-adenosyl-L-methionine + 4 H(+) = [[Fe-S] cluster scaffold protein] + N(6)-[(R)-dihydrolipoyl]-L-lysyl-[protein] + 4 Fe(3+) + 2 hydrogen sulfide + 2 5'-deoxyadenosine + 2 L-methionine + 2 reduced [2Fe-2S]-[ferredoxin]. Its pathway is protein modification; protein lipoylation via endogenous pathway; protein N(6)-(lipoyl)lysine from octanoyl-[acyl-carrier-protein]: step 2/2. Catalyzes the radical-mediated insertion of two sulfur atoms into the C-6 and C-8 positions of the octanoyl moiety bound to the lipoyl domains of lipoate-dependent enzymes, thereby converting the octanoylated domains into lipoylated derivatives. This chain is Lipoyl synthase, found in Coxiella burnetii (strain Dugway 5J108-111).